The following is a 384-amino-acid chain: Cysteine desulfurase (384 aa).

Pyridoxal 5'-phosphate contacts are provided by residues G74–T75, N154, Q180, and S200–H202. K203 is subject to N6-(pyridoxal phosphate)lysine. A pyridoxal 5'-phosphate-binding site is contributed by T238. C325 functions as the Cysteine persulfide intermediate in the catalytic mechanism. C325 serves as a coordination point for [2Fe-2S] cluster.

The protein belongs to the class-V pyridoxal-phosphate-dependent aminotransferase family. NifS/IscS subfamily. In terms of assembly, homodimer. Requires pyridoxal 5'-phosphate as cofactor.

The enzyme catalyses (sulfur carrier)-H + L-cysteine = (sulfur carrier)-SH + L-alanine. Functionally, catalyzes the removal of elemental sulfur atoms from cysteine to produce alanine. Seems to participate in the biosynthesis of the nitrogenase metalloclusters by providing the inorganic sulfur required for the Fe-S core formation. This chain is Cysteine desulfurase, found in Rhodobacter capsulatus (Rhodopseudomonas capsulata).